The following is a 176-amino-acid chain: Siroheme decarboxylase alpha subunit (176 aa).

Positions 1-24 are disordered; sequence MTEAHNACCHPSGTAAGHHGAGKA. A compositionally biased stretch (low complexity) spans 12 to 24; the sequence is SGTAAGHHGAGKA.

Belongs to the Ahb/Nir family. As to quaternary structure, forms a heterodimer composed of AhbA and AhbB. Also forms heterotetramers.

It carries out the reaction siroheme + 2 H(+) = 12,18-didecarboxysiroheme + 2 CO2. Its pathway is porphyrin-containing compound metabolism; protoheme biosynthesis. Functionally, involved in siroheme-dependent heme b biosynthesis. Catalyzes the decarboxylation of siroheme into didecarboxysiroheme. This chain is Siroheme decarboxylase alpha subunit, found in Nitratidesulfovibrio vulgaris (strain ATCC 29579 / DSM 644 / CCUG 34227 / NCIMB 8303 / VKM B-1760 / Hildenborough) (Desulfovibrio vulgaris).